Here is a 310-residue protein sequence, read N- to C-terminus: 4-hydroxyproline 2-epimerase (310 aa).

The Proton acceptor role is filled by Cys85. Residues 86–87 (GH), His205, and Asp231 contribute to the substrate site. Cys235 functions as the Proton donor in the catalytic mechanism. A substrate-binding site is contributed by 236-237 (GT).

It belongs to the proline racemase family.

The catalysed reaction is trans-4-hydroxy-L-proline = cis-4-hydroxy-D-proline. Functionally, catalyzes the epimerization of trans-4-hydroxy-L-proline (t4LHyp) to cis-4-hydroxy-D-proline (c4DHyp). May be involved in a degradation pathway of t4LHyp, which would allow L.aggregata to grow on t4LHyp as a sole carbon source. Displays no proline racemase activity. The sequence is that of 4-hydroxyproline 2-epimerase from Roseibium aggregatum (strain ATCC 25650 / DSM 13394 / JCM 20685 / NBRC 16684 / NCIMB 2208 / IAM 12614 / B1) (Stappia aggregata).